Here is a 490-residue protein sequence, read N- to C-terminus: DENN domain-containing protein 11 (490 aa).

The tract at residues 1–86 (MVEQSDRAPL…GGDALAEEDE (86 aa)) is disordered. The 203-residue stretch at 19 to 221 (AELAPSVPSP…QLQCPGQYSP (203 aa)) folds into the uDENN domain. Composition is skewed to polar residues over residues 30-43 (TGDS…SYPT) and 52-61 (TLNTSPTRPS). Positions 249–397 (LAPIVNRCMH…LNSADREKYR (149 aa)) constitute a cDENN domain. The dDENN domain occupies 399-490 (LCEQRQLLLY…MLVIDNPCCP (92 aa)).

Belongs to the DENND11 family.

Its function is as follows. Probable guanine nucleotide exchange factor (GEF). May promote the exchange of GDP to GTP, converting inactive GDP-bound small GTPases into their active GTP-bound form. The sequence is that of DENN domain-containing protein 11 (dennd11) from Danio rerio (Zebrafish).